The chain runs to 197 residues: Pyridoxal 5'-phosphate synthase subunit PdxT (197 aa).

53–55 is an L-glutamine binding site; it reads GES. C85 (nucleophile) is an active-site residue. L-glutamine contacts are provided by residues R114 and 142–143; that span reads IR. Active-site charge relay system residues include H179 and E181.

It belongs to the glutaminase PdxT/SNO family. As to quaternary structure, in the presence of PdxS, forms a dodecamer of heterodimers. Only shows activity in the heterodimer.

The catalysed reaction is aldehydo-D-ribose 5-phosphate + D-glyceraldehyde 3-phosphate + L-glutamine = pyridoxal 5'-phosphate + L-glutamate + phosphate + 3 H2O + H(+). The enzyme catalyses L-glutamine + H2O = L-glutamate + NH4(+). The protein operates within cofactor biosynthesis; pyridoxal 5'-phosphate biosynthesis. Catalyzes the hydrolysis of glutamine to glutamate and ammonia as part of the biosynthesis of pyridoxal 5'-phosphate. The resulting ammonia molecule is channeled to the active site of PdxS. The chain is Pyridoxal 5'-phosphate synthase subunit PdxT from Thermococcus gammatolerans (strain DSM 15229 / JCM 11827 / EJ3).